Here is a 173-residue protein sequence, read N- to C-terminus: Crossover junction endodeoxyribonuclease RuvC (173 aa).

Residues Asp8, Glu67, and Asp139 contribute to the active site. Asp8, Glu67, and Asp139 together coordinate Mg(2+).

The protein belongs to the RuvC family. As to quaternary structure, homodimer which binds Holliday junction (HJ) DNA. The HJ becomes 2-fold symmetrical on binding to RuvC with unstacked arms; it has a different conformation from HJ DNA in complex with RuvA. In the full resolvosome a probable DNA-RuvA(4)-RuvB(12)-RuvC(2) complex forms which resolves the HJ. The cofactor is Mg(2+).

The protein localises to the cytoplasm. The catalysed reaction is Endonucleolytic cleavage at a junction such as a reciprocal single-stranded crossover between two homologous DNA duplexes (Holliday junction).. Functionally, the RuvA-RuvB-RuvC complex processes Holliday junction (HJ) DNA during genetic recombination and DNA repair. Endonuclease that resolves HJ intermediates. Cleaves cruciform DNA by making single-stranded nicks across the HJ at symmetrical positions within the homologous arms, yielding a 5'-phosphate and a 3'-hydroxyl group; requires a central core of homology in the junction. The consensus cleavage sequence is 5'-(A/T)TT(C/G)-3'. Cleavage occurs on the 3'-side of the TT dinucleotide at the point of strand exchange. HJ branch migration catalyzed by RuvA-RuvB allows RuvC to scan DNA until it finds its consensus sequence, where it cleaves and resolves the cruciform DNA. The sequence is that of Crossover junction endodeoxyribonuclease RuvC from Photobacterium profundum (strain SS9).